The chain runs to 357 residues: Probable leucine aminopeptidase ARB_00576 (357 aa).

Positions 1 to 15 are cleaved as a signal peptide; that stretch reads MKVLAALALSALAMA. Asparagine 76 carries an N-linked (GlcNAc...) asparagine glycan. Residues histidine 167 and aspartate 185 each coordinate Zn(2+). The segment at 169-188 is disordered; sequence DSINGNNPQGEAPGADDNGS. N-linked (GlcNAc...) asparagine glycosylation is present at asparagine 186. The Zn(2+) site is built by glutamate 224 and aspartate 251. Asparagine 269 carries an N-linked (GlcNAc...) asparagine glycan. Cysteine 291 and cysteine 295 are disulfide-bonded. Histidine 324 provides a ligand contact to Zn(2+).

It belongs to the peptidase M28 family. M28E subfamily. As to quaternary structure, monomer. It depends on Zn(2+) as a cofactor.

The protein resides in the secreted. In terms of biological role, probable extracellular aminopeptidase which contributes to pathogenicity. This chain is Probable leucine aminopeptidase ARB_00576, found in Arthroderma benhamiae (strain ATCC MYA-4681 / CBS 112371) (Trichophyton mentagrophytes).